A 1350-amino-acid polypeptide reads, in one-letter code: Zinc finger protein Xfin (1350 aa).

Positions 1–58 (MEEPKCLQREMYKSVMTENYQCVLSLGYPIRKPEIVSMMEVGEELWSKNDSARPGQKE) constitute a KRAB domain. The interval 47–68 (SKNDSARPGQKEVEGETPKESD) is disordered. 37 consecutive C2H2-type zinc fingers follow at residues 108 to 130 (HICSHYGKLFSCYAAVVRHQRMH), 136 to 158 (HHCPHCKKSFVQRSDFIKHQRTH), 164 to 186 (YQCVECQKKFTERSALVNHQRTH), 192 to 214 (YTCLDCQKTFNQRSALTKHRRTH), 220 to 242 (YRCSVCSKSFIQNSDLVKHLRTH), 248 to 270 (YECPLCVKRFAESSALMKHKRTH), 276 to 298 (FRCSECSRSFTHNSDLTAHMRKH), 326 to 348 (YSCSKCRKTFKRWKSFLNHQQTH), 354 to 376 (YLCSHCNKGFIQNSDLVKHFRTH), 382 to 404 (YQCAECHKGFIQKSDLVKHLRTH), 410 to 432 (FKCSHCDKKFTERSALAKHQRTH), 438 to 460 (YKCSDCGKEFTQRSNLILHQRIH), 466 to 488 (YKCTLCDRTFIQNSDLVKHQKVH), 503 to 525 (HKCSKCDLTFSHWSTFMKHSKLH), 531 to 553 (FQCAECKKGFTQKSDLVKHIRVH), 559 to 581 (FKCLLCKKSFSQNSDLHKHWRIH), 587 to 609 (FPCYTCDKSFTERSALIKHHRTH), 615 to 637 (HKCSVCQKGFIQKSALTKHSRTH), 643 to 665 (YPCTQCGKSFIQNSDLVKHQRIH), 671 to 693 (YHCTECNKRFTEGSSLVKHRRTH), 699 to 721 (YRCPQCEKTFIQSSDLVKHLVVH), 750 to 772 (YPCTECGKVFHQRPALLKHLRTH), 778 to 800 (YPCNECDKSFFQTSDLVKHLRTH), 806 to 828 (YHCPECNKGFIQNSDLVKHQRTH), 834 to 856 (YTCSQCDKGFIQRSALTKHMRTH), 862 to 884 (YKCEQCQKCFIQNSDLVKHQRIH), 890 to 912 (YHCPDCDKRFTEGSSLIKHQRIH), 918 to 940 (YPCGVCGKSFSQSSNLLKHLKCH), 988 to 1010 (FKCNDCGKCFAHRSVLIKHVRIH), 1016 to 1038 (YKCSQCTRSFIQKSDLVKHYRTH), 1044 to 1066 (YKCGLCERSFVEKSALSRHQRVH), 1136 to 1158 (YSCSECGKCFTHRSVFLKHWRMH), 1164 to 1186 (YTCKECGKSFSQSSALVKHVRIH), 1192 to 1214 (YPCSTCGKSFIQKSDLAKHQRIH), 1220 to 1242 (YTCTVCGKKFIDRSSVVKHSRTH), 1248 to 1270 (YKCNECTKGFVQKSDLVKHMRTH), and 1276 to 1298 (YGCNCCDRSFSTHSASVRHQRMC).

The protein belongs to the krueppel C2H2-type zinc-finger protein family. Post-translationally, phosphorylated. Phosphorylation enhances RNA binding. In terms of tissue distribution, expressed in oocytes, and in specialized cell types such as neural retina cones in adults.

It is found in the cytoplasm. Its function is as follows. Binds to poly-G sequences in RNA. May function in post-translational regulation processes. This chain is Zinc finger protein Xfin, found in Xenopus laevis (African clawed frog).